Here is a 245-residue protein sequence, read N- to C-terminus: Orotidine 5'-phosphate decarboxylase (245 aa).

Substrate is bound by residues Asp-22, Lys-44, 71 to 80, Thr-131, Arg-192, Gln-201, Gly-221, and Arg-222; that span reads DLKFHDIPNT. The active-site Proton donor is Lys-73.

Belongs to the OMP decarboxylase family. Type 1 subfamily. Homodimer.

The catalysed reaction is orotidine 5'-phosphate + H(+) = UMP + CO2. The protein operates within pyrimidine metabolism; UMP biosynthesis via de novo pathway; UMP from orotate: step 2/2. In terms of biological role, catalyzes the decarboxylation of orotidine 5'-monophosphate (OMP) to uridine 5'-monophosphate (UMP). This Escherichia coli O45:K1 (strain S88 / ExPEC) protein is Orotidine 5'-phosphate decarboxylase.